A 102-amino-acid chain; its full sequence is Small ribosomal subunit protein uS10 (102 aa).

The protein belongs to the universal ribosomal protein uS10 family. In terms of assembly, part of the 30S ribosomal subunit.

Functionally, involved in the binding of tRNA to the ribosomes. The polypeptide is Small ribosomal subunit protein uS10 (Latilactobacillus sakei subsp. sakei (strain 23K) (Lactobacillus sakei subsp. sakei)).